The following is a 160-amino-acid chain: Dysbindin domain-containing protein 1 (160 aa).

Disordered regions lie at residues 1–34 and 95–160; these read MESP…GDTC and ADSD…PKED. 3 positions are modified to phosphoserine: S3, S97, and S121. Residues 127 to 143 show a composition bias toward basic and acidic residues; that stretch reads TRAEQNREKQTPSDPER.

The protein belongs to the dysbindin family.

This Rattus norvegicus (Rat) protein is Dysbindin domain-containing protein 1 (Dbndd1).